A 461-amino-acid polypeptide reads, in one-letter code: Bifunctional protein GlmU (461 aa).

The tract at residues methionine 1 to arginine 243 is pyrophosphorylase. UDP-N-acetyl-alpha-D-glucosamine contacts are provided by residues leucine 24–glycine 27, lysine 38, glutamine 86, glycine 91–threonine 92, tyrosine 112–aspartate 114, glycine 155, glutamate 169, asparagine 184, and asparagine 241. Aspartate 114 lines the Mg(2+) pocket. Asparagine 241 is a binding site for Mg(2+). The segment at alanine 244 to glycine 264 is linker. The N-acetyltransferase stretch occupies residues glycine 265–glycine 461. Arginine 330 and lysine 348 together coordinate UDP-N-acetyl-alpha-D-glucosamine. Histidine 360 acts as the Proton acceptor in catalysis. UDP-N-acetyl-alpha-D-glucosamine-binding residues include tyrosine 363 and asparagine 374. Residues alanine 377, asparagine 383–tyrosine 384, serine 402, alanine 420, and arginine 437 each bind acetyl-CoA.

In the N-terminal section; belongs to the N-acetylglucosamine-1-phosphate uridyltransferase family. This sequence in the C-terminal section; belongs to the transferase hexapeptide repeat family. Homotrimer. Mg(2+) is required as a cofactor.

It localises to the cytoplasm. The catalysed reaction is alpha-D-glucosamine 1-phosphate + acetyl-CoA = N-acetyl-alpha-D-glucosamine 1-phosphate + CoA + H(+). It carries out the reaction N-acetyl-alpha-D-glucosamine 1-phosphate + UTP + H(+) = UDP-N-acetyl-alpha-D-glucosamine + diphosphate. The protein operates within nucleotide-sugar biosynthesis; UDP-N-acetyl-alpha-D-glucosamine biosynthesis; N-acetyl-alpha-D-glucosamine 1-phosphate from alpha-D-glucosamine 6-phosphate (route II): step 2/2. It participates in nucleotide-sugar biosynthesis; UDP-N-acetyl-alpha-D-glucosamine biosynthesis; UDP-N-acetyl-alpha-D-glucosamine from N-acetyl-alpha-D-glucosamine 1-phosphate: step 1/1. Its pathway is bacterial outer membrane biogenesis; LPS lipid A biosynthesis. In terms of biological role, catalyzes the last two sequential reactions in the de novo biosynthetic pathway for UDP-N-acetylglucosamine (UDP-GlcNAc). The C-terminal domain catalyzes the transfer of acetyl group from acetyl coenzyme A to glucosamine-1-phosphate (GlcN-1-P) to produce N-acetylglucosamine-1-phosphate (GlcNAc-1-P), which is converted into UDP-GlcNAc by the transfer of uridine 5-monophosphate (from uridine 5-triphosphate), a reaction catalyzed by the N-terminal domain. This is Bifunctional protein GlmU from Gluconacetobacter diazotrophicus (strain ATCC 49037 / DSM 5601 / CCUG 37298 / CIP 103539 / LMG 7603 / PAl5).